The following is an 85-amino-acid chain: Small ribosomal subunit protein uS17 (85 aa).

Belongs to the universal ribosomal protein uS17 family. In terms of assembly, part of the 30S ribosomal subunit.

In terms of biological role, one of the primary rRNA binding proteins, it binds specifically to the 5'-end of 16S ribosomal RNA. The protein is Small ribosomal subunit protein uS17 of Syntrophus aciditrophicus (strain SB).